The following is a 289-amino-acid chain: Ribosomal RNA small subunit methyltransferase H (289 aa).

S-adenosyl-L-methionine-binding positions include 40 to 42 (GGH), aspartate 60, phenylalanine 84, aspartate 106, and glutamine 113.

This sequence belongs to the methyltransferase superfamily. RsmH family.

The protein resides in the cytoplasm. It carries out the reaction cytidine(1402) in 16S rRNA + S-adenosyl-L-methionine = N(4)-methylcytidine(1402) in 16S rRNA + S-adenosyl-L-homocysteine + H(+). Specifically methylates the N4 position of cytidine in position 1402 (C1402) of 16S rRNA. In Haemophilus influenzae (strain PittGG), this protein is Ribosomal RNA small subunit methyltransferase H.